A 196-amino-acid chain; its full sequence is Lipoprotein signal peptidase (196 aa).

Transmembrane regions (helical) follow at residues 75-95 (IVFL…MMSS) and 97-117 (TIGG…NLID). Residues Asp-126 and Asp-144 contribute to the active site. A helical transmembrane segment spans residues 135 to 155 (YSFPVFNLADCFITLGVIILV).

Belongs to the peptidase A8 family.

It is found in the cell inner membrane. It carries out the reaction Release of signal peptides from bacterial membrane prolipoproteins. Hydrolyzes -Xaa-Yaa-Zaa-|-(S,diacylglyceryl)Cys-, in which Xaa is hydrophobic (preferably Leu), and Yaa (Ala or Ser) and Zaa (Gly or Ala) have small, neutral side chains.. Its pathway is protein modification; lipoprotein biosynthesis (signal peptide cleavage). This protein specifically catalyzes the removal of signal peptides from prolipoproteins. In Rickettsia bellii (strain OSU 85-389), this protein is Lipoprotein signal peptidase.